The chain runs to 401 residues: Phosphoglycerate kinase 3, cytosolic (401 aa).

Residues V24, D25, N27, R41, S63, H64, G66, R67, R122, H154, and R155 each coordinate (2R)-3-phosphoglycerate. Position 200 (G200) interacts with ADP. G200 serves as a coordination point for CDP. AMP is bound by residues K202 and K206. K206 contacts ATP. Position 224 (G224) interacts with ADP. Residue G224 coordinates CDP. 2 residues coordinate AMP: G225 and G297. Positions 225, 297, and 321 each coordinate ATP. The CDP site is built by G322 and F327. F327 contacts ADP. E328 contacts AMP. 3 residues coordinate ATP: E328, D359, and S360. Position 359 (D359) interacts with Mg(2+).

Belongs to the phosphoglycerate kinase family. Monomer. It depends on Mg(2+) as a cofactor. As to expression, expressed in roots, leaves and inflorescence.

The protein resides in the cytoplasm. The catalysed reaction is (2R)-3-phosphoglycerate + ATP = (2R)-3-phospho-glyceroyl phosphate + ADP. Its pathway is carbohydrate degradation; glycolysis; pyruvate from D-glyceraldehyde 3-phosphate: step 2/5. This is Phosphoglycerate kinase 3, cytosolic from Arabidopsis thaliana (Mouse-ear cress).